A 218-amino-acid polypeptide reads, in one-letter code: Recombination protein RecR (218 aa).

Residues 56–71 (CRICCNISREEVCRIC) form a C4-type zinc finger. The region spanning 79–195 (STICVVEEPK…VVSRLASGMP (117 aa)) is the Toprim domain.

Belongs to the RecR family.

May play a role in DNA repair. It seems to be involved in an RecBC-independent recombinational process of DNA repair. It may act with RecF and RecO. The sequence is that of Recombination protein RecR from Corynebacterium diphtheriae (strain ATCC 700971 / NCTC 13129 / Biotype gravis).